A 476-amino-acid polypeptide reads, in one-letter code: Bifunctional protein HldE (476 aa).

Residues 1-318 (MKPVLPDYSK…AEAVHGSKDT (318 aa)) form a ribokinase region. 195-198 (NMSE) serves as a coordination point for ATP. D264 is an active-site residue. The cytidylyltransferase stretch occupies residues 344 to 476 (MTNGCFDILH…IIEAIKGGRG (133 aa)).

This sequence in the N-terminal section; belongs to the carbohydrate kinase PfkB family. In the C-terminal section; belongs to the cytidylyltransferase family. As to quaternary structure, homodimer.

It carries out the reaction D-glycero-beta-D-manno-heptose 7-phosphate + ATP = D-glycero-beta-D-manno-heptose 1,7-bisphosphate + ADP + H(+). The enzyme catalyses D-glycero-beta-D-manno-heptose 1-phosphate + ATP + H(+) = ADP-D-glycero-beta-D-manno-heptose + diphosphate. It participates in nucleotide-sugar biosynthesis; ADP-L-glycero-beta-D-manno-heptose biosynthesis; ADP-L-glycero-beta-D-manno-heptose from D-glycero-beta-D-manno-heptose 7-phosphate: step 1/4. It functions in the pathway nucleotide-sugar biosynthesis; ADP-L-glycero-beta-D-manno-heptose biosynthesis; ADP-L-glycero-beta-D-manno-heptose from D-glycero-beta-D-manno-heptose 7-phosphate: step 3/4. In terms of biological role, catalyzes the phosphorylation of D-glycero-D-manno-heptose 7-phosphate at the C-1 position to selectively form D-glycero-beta-D-manno-heptose-1,7-bisphosphate. Functionally, catalyzes the ADP transfer from ATP to D-glycero-beta-D-manno-heptose 1-phosphate, yielding ADP-D-glycero-beta-D-manno-heptose. The sequence is that of Bifunctional protein HldE from Vibrio cholerae serotype O1 (strain M66-2).